Consider the following 394-residue polypeptide: Probable sugar efflux transporter (394 aa).

A run of 12 helical transmembrane segments spans residues 15–35 (VLMLAIAAFIFNTTEFVPVGL), 50–70 (VGLMLTIYAWVVALMSLPMML), 79–99 (MLLMIIFVMFVASHALSSVAW), 109–129 (IGIALSHAIFWSITASLAIRV), 137–157 (QALSMMATGTALAMVLGLPIG), 168–188 (ITFAVIGAVAFVTMLLLLKLL), 209–229 (PALVALYLLIAITVTAHYTAY), 249–269 (FLLLIFGAAGIVGSVLFSIYG), 272–292 (FPATFLLAAIGLITLSMMCLY), 299–319 (LAVSTLCVIWGIAVMVMGLAV), 333–353 (VAMSLLSGIYNIGIGAGALLG), and 362–382 (MASVGYVGGAIGILSLLWCAW).

This sequence belongs to the major facilitator superfamily. SotB (TC 2.A.1.2) family.

The protein resides in the cell inner membrane. Its function is as follows. Involved in the efflux of sugars. The physiological role may be the reduction of the intracellular concentration of toxic sugars or sugar metabolites. The polypeptide is Probable sugar efflux transporter (Erwinia tasmaniensis (strain DSM 17950 / CFBP 7177 / CIP 109463 / NCPPB 4357 / Et1/99)).